We begin with the raw amino-acid sequence, 104 residues long: Nucleoid-associated protein EF_2780 (104 aa).

Belongs to the YbaB/EbfC family. Homodimer.

It is found in the cytoplasm. The protein localises to the nucleoid. In terms of biological role, binds to DNA and alters its conformation. May be involved in regulation of gene expression, nucleoid organization and DNA protection. The chain is Nucleoid-associated protein EF_2780 from Enterococcus faecalis (strain ATCC 700802 / V583).